Consider the following 232-residue polypeptide: Ubiquinone biosynthesis O-methyltransferase (232 aa).

Residues R36, G55, D76, and L120 each coordinate S-adenosyl-L-methionine.

Belongs to the methyltransferase superfamily. UbiG/COQ3 family.

It carries out the reaction a 3-demethylubiquinol + S-adenosyl-L-methionine = a ubiquinol + S-adenosyl-L-homocysteine + H(+). The enzyme catalyses a 3-(all-trans-polyprenyl)benzene-1,2-diol + S-adenosyl-L-methionine = a 2-methoxy-6-(all-trans-polyprenyl)phenol + S-adenosyl-L-homocysteine + H(+). The protein operates within cofactor biosynthesis; ubiquinone biosynthesis. Its function is as follows. O-methyltransferase that catalyzes the 2 O-methylation steps in the ubiquinone biosynthetic pathway. This chain is Ubiquinone biosynthesis O-methyltransferase, found in Stutzerimonas stutzeri (strain A1501) (Pseudomonas stutzeri).